The sequence spans 34 residues: Protamine-Y1/Y2 (34 aa).

The disordered stretch occupies residues 1-34; that stretch reads PRRRRQASRPVRRRRRYRRSTAARRRRRVVRRRR.

In terms of tissue distribution, testis.

The protein resides in the nucleus. It is found in the chromosome. Its function is as follows. Protamines substitute for histones in the chromatin of sperm during the haploid phase of spermatogenesis. They compact sperm DNA into a highly condensed, stable and inactive complex. This Thunnus thynnus (Atlantic bluefin tuna) protein is Protamine-Y1/Y2.